A 665-amino-acid chain; its full sequence is Translation factor guf1, mitochondrial (665 aa).

A mitochondrion-targeting transit peptide spans 1 to 53; the sequence is MRGCLQVLRWLSTSPARRPVSSGLRLRSYEIVSPSILRPFTSTVRRQAQASRN. The region spanning 67 to 247 is the tr-type G domain; the sequence is ERFRNFCIVA…TVIERIPAPV (181 aa). Residues 76 to 83, 140 to 144, and 194 to 197 each bind GTP; these read AHVDHGKS, DTPGH, and NKVD.

It belongs to the TRAFAC class translation factor GTPase superfamily. Classic translation factor GTPase family. LepA subfamily.

The protein localises to the mitochondrion inner membrane. The catalysed reaction is GTP + H2O = GDP + phosphate + H(+). Promotes mitochondrial protein synthesis. May act as a fidelity factor of the translation reaction, by catalyzing a one-codon backward translocation of tRNAs on improperly translocated ribosomes. Binds to mitochondrial ribosomes in a GTP-dependent manner. The protein is Translation factor guf1, mitochondrial (guf1) of Talaromyces stipitatus (strain ATCC 10500 / CBS 375.48 / QM 6759 / NRRL 1006) (Penicillium stipitatum).